The primary structure comprises 369 residues: Uroporphyrinogen decarboxylase (369 aa).

Substrate is bound by residues 28–32, Asp-78, Tyr-154, Ser-209, and His-339; that span reads RQAGR.

The protein belongs to the uroporphyrinogen decarboxylase family. In terms of assembly, homodimer.

The protein localises to the cytoplasm. The catalysed reaction is uroporphyrinogen III + 4 H(+) = coproporphyrinogen III + 4 CO2. The protein operates within porphyrin-containing compound metabolism; protoporphyrin-IX biosynthesis; coproporphyrinogen-III from 5-aminolevulinate: step 4/4. Its function is as follows. Catalyzes the decarboxylation of four acetate groups of uroporphyrinogen-III to yield coproporphyrinogen-III. This Polaromonas naphthalenivorans (strain CJ2) protein is Uroporphyrinogen decarboxylase.